The primary structure comprises 156 residues: Large ribosomal subunit protein eL24 (156 aa).

A compositionally biased stretch (basic and acidic residues) spans 110-123; that stretch reads RAAKEKQKQKELEK. The interval 110 to 156 is disordered; that stretch reads RAAKEKQKQKELEKKAKKVEKKKPTLAPKQKAAKITQKPAPRVGGKR.

This sequence belongs to the eukaryotic ribosomal protein eL24 family.

This Schistosoma japonicum (Blood fluke) protein is Large ribosomal subunit protein eL24 (RPL24).